We begin with the raw amino-acid sequence, 165 residues long: Xanthine-guanine phosphoribosyltransferase (165 aa).

5-phospho-alpha-D-ribose 1-diphosphate-binding positions include 41–42 and 98–106; these read RG and DDLTDTGKT. Aspartate 99 is a Mg(2+) binding site. 2 residues coordinate guanine: aspartate 102 and isoleucine 145. Xanthine-binding residues include aspartate 102 and isoleucine 145. Residues 102-106 and 144-145 contribute to the GMP site; these read DTGKT and WI.

It belongs to the purine/pyrimidine phosphoribosyltransferase family. XGPT subfamily. As to quaternary structure, homotetramer. Mg(2+) serves as cofactor.

The protein resides in the cell inner membrane. The catalysed reaction is GMP + diphosphate = guanine + 5-phospho-alpha-D-ribose 1-diphosphate. It carries out the reaction XMP + diphosphate = xanthine + 5-phospho-alpha-D-ribose 1-diphosphate. It catalyses the reaction IMP + diphosphate = hypoxanthine + 5-phospho-alpha-D-ribose 1-diphosphate. It functions in the pathway purine metabolism; GMP biosynthesis via salvage pathway; GMP from guanine: step 1/1. It participates in purine metabolism; XMP biosynthesis via salvage pathway; XMP from xanthine: step 1/1. Functionally, purine salvage pathway enzyme that catalyzes the transfer of the ribosyl-5-phosphate group from 5-phospho-alpha-D-ribose 1-diphosphate (PRPP) to the N9 position of the 6-oxopurines guanine and xanthine to form the corresponding ribonucleotides GMP (guanosine 5'-monophosphate) and XMP (xanthosine 5'-monophosphate), with the release of PPi. To a lesser extent, also acts on hypoxanthine. This is Xanthine-guanine phosphoribosyltransferase from Brucella suis (strain ATCC 23445 / NCTC 10510).